The chain runs to 156 residues: Endogenous retrovirus group K member 24 Pro protein (156 aa).

Positions 21 to 96 (FEGLVDTGAD…IPLNLWGRDL (76 aa)) constitute a Peptidase A2 domain. The active site involves Asp-26. The G-patch domain occupies 111-156 (YSPTSQKIMTKMGYIPGKGLGKNEDGIKIPFEAKINQKREGIGYPF).

This sequence belongs to the peptidase A2 family. HERV class-II K(HML-2) subfamily. Active as a homodimer. Autoproteolytically processed at the N-terminus. Expected C-terminal autoprocessing not detected. The sequence shown is that of the processed Pro protein.

It catalyses the reaction Processing at the authentic HIV-1 PR recognition site and release of the mature p17 matrix and the p24 capsid protein, as a result of the cleavage of the -SQNY-|-PIVQ- cleavage site.. Retroviral proteases have roles in processing of the primary translation products and the maturation of the viral particle. Endogenous Pro proteins may have kept, lost or modified their original function during evolution. This endogenous protein has retained most of the characteristics of retroviral proteases. The chain is Endogenous retrovirus group K member 24 Pro protein (ERVK-24) from Homo sapiens (Human).